Reading from the N-terminus, the 238-residue chain is Orotidine 5'-phosphate decarboxylase (238 aa).

Substrate-binding positions include Asp-10, Lys-32, 59 to 68 (DLKLHDIPNT), Thr-122, Arg-184, Gln-193, Gly-213, and Arg-214. Lys-61 serves as the catalytic Proton donor.

It belongs to the OMP decarboxylase family. Type 1 subfamily. As to quaternary structure, homodimer.

The catalysed reaction is orotidine 5'-phosphate + H(+) = UMP + CO2. It functions in the pathway pyrimidine metabolism; UMP biosynthesis via de novo pathway; UMP from orotate: step 2/2. Functionally, catalyzes the decarboxylation of orotidine 5'-monophosphate (OMP) to uridine 5'-monophosphate (UMP). The protein is Orotidine 5'-phosphate decarboxylase of Bacillus anthracis (strain A0248).